We begin with the raw amino-acid sequence, 129 residues long: Small ribosomal subunit protein uS11 (129 aa).

Belongs to the universal ribosomal protein uS11 family. As to quaternary structure, part of the 30S ribosomal subunit. Interacts with proteins S7 and S18. Binds to IF-3.

In terms of biological role, located on the platform of the 30S subunit, it bridges several disparate RNA helices of the 16S rRNA. Forms part of the Shine-Dalgarno cleft in the 70S ribosome. The sequence is that of Small ribosomal subunit protein uS11 from Parabacteroides distasonis (strain ATCC 8503 / DSM 20701 / CIP 104284 / JCM 5825 / NCTC 11152).